Consider the following 673-residue polypeptide: Pesticin receptor (673 aa).

Residues 1-22 (MKMTRLYPLALGGLLLPAIANA) form the signal peptide. Residues 30–37 (STLEVTAS) carry the TonB box motif. The region spanning 41–155 (SRSASANNVS…QGGIINIVTQ (115 aa)) is the TBDR plug domain. One can recognise a TBDR beta-barrel domain in the interval 160-672 (TPRGYIEGGV…TVGINTRIDF (513 aa)). Residues 657–673 (QVNMGRTVGINTRIDFF) carry the TonB C-terminal box motif.

The protein belongs to the TonB-dependent receptor family.

It is found in the cell outer membrane. Functionally, receptor for the bacteriocin pesticin and for the siderophore yersiniabactin. The chain is Pesticin receptor (fyuA) from Yersinia enterocolitica serotype O:8 / biotype 1B (strain NCTC 13174 / 8081).